The sequence spans 131 residues: Ribonuclease VapC30 (131 aa).

The region spanning 1–129 is the PINc domain; sequence MVIDTSALVA…FQHTDIATVA (129 aa). Positions 4 and 99 each coordinate Mg(2+).

This sequence belongs to the PINc/VapC protein family. Mg(2+) serves as cofactor.

Functionally, toxic component of a type II toxin-antitoxin (TA) system. An RNase. Its toxic effect is neutralized by coexpression with cognate antitoxin VapB30. The chain is Ribonuclease VapC30 from Mycobacterium tuberculosis (strain CDC 1551 / Oshkosh).